The primary structure comprises 456 residues: Chitin synthase regulatory factor 1 (456 aa).

3 disordered regions span residues 1–20 (MPAS…ALLV), 38–74 (ESPL…SLSS), and 139–158 (SKPS…SGSE). Positions 140–158 (KPSLSSNSSDSSFSKSGSE) are enriched in low complexity. 2 positions are modified to phosphoserine: Ser-227 and Ser-230. Sel1-like repeat units lie at residues 293 to 327 (NFVP…SLGH), 328 to 364 (DRSS…DKGN), 365 to 402 (ADAM…MLGH), and 403 to 438 (APAC…INDS).

In terms of biological role, involved in chitin biosynthesis. This chain is Chitin synthase regulatory factor 1 (chr1), found in Schizosaccharomyces pombe (strain 972 / ATCC 24843) (Fission yeast).